Here is a 227-residue protein sequence, read N- to C-terminus: 7-cyano-7-deazaguanine synthase (227 aa).

An ATP-binding site is contributed by 7–17 (LSGGLDSSTIL). Zn(2+) contacts are provided by Cys191, Cys199, Cys202, and Cys205.

Belongs to the QueC family. It depends on Zn(2+) as a cofactor.

It carries out the reaction 7-carboxy-7-deazaguanine + NH4(+) + ATP = 7-cyano-7-deazaguanine + ADP + phosphate + H2O + H(+). It participates in purine metabolism; 7-cyano-7-deazaguanine biosynthesis. Its function is as follows. Catalyzes the ATP-dependent conversion of 7-carboxy-7-deazaguanine (CDG) to 7-cyano-7-deazaguanine (preQ(0)). This is 7-cyano-7-deazaguanine synthase from Trichormus variabilis (strain ATCC 29413 / PCC 7937) (Anabaena variabilis).